The following is a 153-amino-acid chain: Ribosome maturation factor RimP (153 aa).

It belongs to the RimP family.

It localises to the cytoplasm. Required for maturation of 30S ribosomal subunits. The protein is Ribosome maturation factor RimP of Coxiella burnetii (strain CbuG_Q212) (Coxiella burnetii (strain Q212)).